Consider the following 248-residue polypeptide: Uridylate kinase (248 aa).

13–16 (KLSG) lines the ATP pocket. Glycine 55 provides a ligand contact to UMP. Residues glycine 56 and arginine 60 each contribute to the ATP site. UMP is bound by residues aspartate 75 and 136–143 (TGNPYFTT). ATP is bound by residues threonine 163, tyrosine 169, and aspartate 172.

It belongs to the UMP kinase family. Homohexamer.

It is found in the cytoplasm. The catalysed reaction is UMP + ATP = UDP + ADP. The protein operates within pyrimidine metabolism; CTP biosynthesis via de novo pathway; UDP from UMP (UMPK route): step 1/1. Its activity is regulated as follows. Inhibited by UTP. Catalyzes the reversible phosphorylation of UMP to UDP. This Leptospira interrogans serogroup Icterohaemorrhagiae serovar copenhageni (strain Fiocruz L1-130) protein is Uridylate kinase.